Here is a 575-residue protein sequence, read N- to C-terminus: Major outer membrane protein MspA (575 aa).

The N-terminal stretch at 1–19 (MKKALVFFVALAMIGSVFA) is a signal peptide.

The protein resides in the cell outer membrane. In terms of biological role, major component of the outer membrane sheath. The polypeptide is Major outer membrane protein MspA (mspA) (Treponema maltophilum).